The following is a 444-amino-acid chain: Homogentisate 1,2-dioxygenase (444 aa).

Residues 92-111 (GDSADVPPTPPNQLRWDPLP) form a disordered region. The active-site Proton acceptor is the His298. Fe cation is bound by residues His341 and Glu347. 2 residues coordinate homogentisate: Tyr356 and His377. Residue His377 participates in Fe cation binding.

This sequence belongs to the homogentisate dioxygenase family. As to quaternary structure, hexamer; dimer of trimers. The cofactor is Fe cation.

The enzyme catalyses homogentisate + O2 = 4-maleylacetoacetate + H(+). Its pathway is amino-acid degradation; L-phenylalanine degradation; acetoacetate and fumarate from L-phenylalanine: step 4/6. Functionally, involved in the catabolism of homogentisate (2,5-dihydroxyphenylacetate or 2,5-OH-PhAc), a central intermediate in the degradation of phenylalanine and tyrosine. Catalyzes the oxidative ring cleavage of the aromatic ring of homogentisate to yield maleylacetoacetate. This is Homogentisate 1,2-dioxygenase from Burkholderia vietnamiensis (strain G4 / LMG 22486) (Burkholderia cepacia (strain R1808)).